Reading from the N-terminus, the 258-residue chain is Spindlin-3 (258 aa).

The tract at residues 1–23 (MKTPFGKAAAGQRSRTGAGHGSV) is disordered. Tudor-like domain stretches follow at residues 50-99 (VGCR…LELH), 129-178 (VGKA…YQLL), and 210-255 (VGKQ…YDLV). 2 histone H3K4me3 and H3R8me2a binding regions span residues glutamate 138 and 246-248 (DFH).

This sequence belongs to the SPIN/STSY family. In terms of assembly, interacts with C11orf84/SPINDOC.

Its function is as follows. Exhibits H3K4me3-binding activity. The protein is Spindlin-3 (SPIN3) of Pongo abelii (Sumatran orangutan).